The sequence spans 629 residues: uncharacterized protein (629 aa).

H562 (proton acceptor) is an active-site residue.

This sequence belongs to the GMC oxidoreductase family. It depends on FAD as a cofactor.

This is an uncharacterized protein from Mycobacterium tuberculosis (strain CDC 1551 / Oshkosh).